A 23-amino-acid polypeptide reads, in one-letter code: Defensin D4 (23 aa).

The protein belongs to the DEFL family. Group IV subfamily. In terms of tissue distribution, distributed in the epidermal cell layer of leaves and in the subepidermal layer region of stems. Not in roots.

Its subcellular location is the secreted. The protein resides in the cell wall. Its function is as follows. Antimicrobial peptide. Active against Fusarium spp., Gram-positive and Gram-negative bacterial pathogens. In Spinacia oleracea (Spinach), this protein is Defensin D4.